The primary structure comprises 164 residues: Diphosphoinositol polyphosphate phosphohydrolase 3-beta (164 aa).

Substrate-binding positions include R9, 17 to 19 (KKR), and 38 to 40 (SSR). A Nudix hydrolase domain is found at 17-144 (KKRAACLCFR…VHAEYLEKLK (128 aa)). Mg(2+) contacts are provided by G49 and E65. A Nudix box motif is present at residues 50-71 (GGMEPEEEPGGAAVREVYEEAG). E68 serves as the catalytic Proton acceptor. E69 lines the Mg(2+) pocket. Substrate-binding positions include 89–91 (RKH), R115, and K133. Residues 144 to 164 (KLGGSPTNGNSMAPSSPDSDP) are disordered. The segment covering 148 to 164 (SPTNGNSMAPSSPDSDP) has biased composition (polar residues).

The protein belongs to the Nudix hydrolase family. DIPP subfamily. The cofactor is Mg(2+). Mn(2+) is required as a cofactor. As to expression, mainly expressed in testis and, at lower level in brain. According to PubMed:12121577, it is also expressed in pancreas and weakly expressed in thymus, prostate, ovary, lung, small intestine and heart.

Its subcellular location is the cytoplasm. It carries out the reaction diphospho-myo-inositol polyphosphate + H2O = myo-inositol polyphosphate + phosphate.. The catalysed reaction is P(1),P(6)-bis(5'-adenosyl) hexaphosphate + H2O = adenosine 5'-pentaphosphate + AMP + 2 H(+). The enzyme catalyses P(1),P(5)-bis(5'-adenosyl) pentaphosphate + H2O = adenosine 5'-tetraphosphate + AMP + 2 H(+). In terms of biological role, cleaves a beta-phosphate from the diphosphate groups in PP-InsP5 (diphosphoinositol pentakisphosphate), suggesting that it may play a role in signal transduction. Also able to catalyze the hydrolysis of dinucleoside oligophosphates, with Ap6A and Ap5A being the preferred substrates. The major reaction products are ADP and p4a from Ap6A and ADP and ATP from Ap5A. Also able to hydrolyze 5-phosphoribose 1-diphosphate. This is Diphosphoinositol polyphosphate phosphohydrolase 3-beta from Homo sapiens (Human).